A 381-amino-acid chain; its full sequence is MFTDLPRDLETEILSRVPATSLQKLKPTCKRWYTLFKDPEFLKKHVGRAEREVISLMSLRVYSLSVNLSGIHSSVEMTGMLNSLKDSEDVKISDITECNGLLLCTTDDSRLVVWNPYTGETRWIPYKSNSPYEMYQKFVLGYDNTNKSRYSYKILRCYHGLIDFGYEFEIYEFNSHSWRRFYDNSPNCSFESKGVTLKGNTYWFASDTEGRHIILRFDFATERFGRLSLLYQSGGYVDNVVETGVLSAVREEKLALLYERFDELNDSSEMKIWVTNTKIVEAKDLSWSDFLVVDSSKFMVTRMTNVMSFLVDEEKKMVVVCDTDIDQHMNRFYIVGEDIYKEVYKDIAQGWFSYWPLLISYAPSLVQIQQGKVIPGGKRKR.

An F-box domain is found at 1 to 45; the sequence is MFTDLPRDLETEILSRVPATSLQKLKPTCKRWYTLFKDPEFLKKH. Kelch repeat units follow at residues 151–199, 229–281, and 331–379; these read SYKI…TLKG, LLYQ…KIVE, and RFYI…GGKR.

In Arabidopsis thaliana (Mouse-ear cress), this protein is Putative F-box/kelch-repeat protein At3g17570.